A 476-amino-acid chain; its full sequence is Ribulose bisphosphate carboxylase large chain (476 aa).

The propeptide occupies 1–2 (MS). Position 3 is an N-acetylproline (P3). K14 bears the N6,N6,N6-trimethyllysine mark. The substrate site is built by N123 and T173. The active-site Proton acceptor is K175. A substrate-binding site is contributed by K177. K201, D203, and E204 together coordinate Mg(2+). At K201 the chain carries N6-carboxylysine. Residue H294 is the Proton acceptor of the active site. Substrate contacts are provided by R295, H327, and S379.

This sequence belongs to the RuBisCO large chain family. Type I subfamily. In terms of assembly, heterohexadecamer of 8 large chains and 8 small chains; disulfide-linked. The disulfide link is formed within the large subunit homodimers. The cofactor is Mg(2+). In terms of processing, the disulfide bond which can form in the large chain dimeric partners within the hexadecamer appears to be associated with oxidative stress and protein turnover.

The protein resides in the plastid. Its subcellular location is the chloroplast. The catalysed reaction is 2 (2R)-3-phosphoglycerate + 2 H(+) = D-ribulose 1,5-bisphosphate + CO2 + H2O. It catalyses the reaction D-ribulose 1,5-bisphosphate + O2 = 2-phosphoglycolate + (2R)-3-phosphoglycerate + 2 H(+). Its function is as follows. RuBisCO catalyzes two reactions: the carboxylation of D-ribulose 1,5-bisphosphate, the primary event in carbon dioxide fixation, as well as the oxidative fragmentation of the pentose substrate in the photorespiration process. Both reactions occur simultaneously and in competition at the same active site. The chain is Ribulose bisphosphate carboxylase large chain from Arenaria drummondii (Drummond sandwort).